A 406-amino-acid chain; its full sequence is Bifunctional enzyme IspD/IspF (406 aa).

Residues 1-247 are 2-C-methyl-D-erythritol 4-phosphate cytidylyltransferase; sequence MSLIRVNGEA…ALFFNPAKDT (247 aa). The tract at residues 248-406 is 2-C-methyl-D-erythritol 2,4-cyclodiphosphate synthase; that stretch reads FIGMGFDTHA…HVSMRYKQKL (159 aa). A divalent metal cation is bound by residues aspartate 254 and histidine 256. 4-CDP-2-C-methyl-D-erythritol 2-phosphate contacts are provided by residues 254 to 256 and 280 to 281; these read DTH and HS. Histidine 288 provides a ligand contact to a divalent metal cation. Residues 302-304, 307-311, 378-381, phenylalanine 385, and lysine 388 contribute to the 4-CDP-2-C-methyl-D-erythritol 2-phosphate site; these read DIG, FPDND, and TTME.

In the N-terminal section; belongs to the IspD/TarI cytidylyltransferase family. IspD subfamily. The protein in the C-terminal section; belongs to the IspF family. Requires a divalent metal cation as cofactor.

It carries out the reaction 2-C-methyl-D-erythritol 4-phosphate + CTP + H(+) = 4-CDP-2-C-methyl-D-erythritol + diphosphate. It catalyses the reaction 4-CDP-2-C-methyl-D-erythritol 2-phosphate = 2-C-methyl-D-erythritol 2,4-cyclic diphosphate + CMP. Its pathway is isoprenoid biosynthesis; isopentenyl diphosphate biosynthesis via DXP pathway; isopentenyl diphosphate from 1-deoxy-D-xylulose 5-phosphate: step 2/6. The protein operates within isoprenoid biosynthesis; isopentenyl diphosphate biosynthesis via DXP pathway; isopentenyl diphosphate from 1-deoxy-D-xylulose 5-phosphate: step 4/6. Bifunctional enzyme that catalyzes the formation of 4-diphosphocytidyl-2-C-methyl-D-erythritol from CTP and 2-C-methyl-D-erythritol 4-phosphate (MEP) (IspD), and catalyzes the conversion of 4-diphosphocytidyl-2-C-methyl-D-erythritol 2-phosphate (CDP-ME2P) to 2-C-methyl-D-erythritol 2,4-cyclodiphosphate (ME-CPP) with a corresponding release of cytidine 5-monophosphate (CMP) (IspF). The protein is Bifunctional enzyme IspD/IspF of Helicobacter pylori (strain Shi470).